We begin with the raw amino-acid sequence, 318 residues long: L-malyl-CoA/beta-methylmalyl-CoA lyase (318 aa).

Residues phenylalanine 19, arginine 24, lysine 30, and arginine 76 each coordinate substrate. Mg(2+) is bound by residues glutamate 141 and aspartate 168. Substrate contacts are provided by residues 167-168 and 251-252; these read AD and IH.

Belongs to the HpcH/HpaI aldolase family. As to quaternary structure, homohexamer. Dimer of trimers. Mg(2+) is required as a cofactor. Requires Mn(2+) as cofactor.

The enzyme catalyses (S)-malyl-CoA = glyoxylate + acetyl-CoA. The catalysed reaction is (2R,3S)-beta-methylmalyl-CoA = propanoyl-CoA + glyoxylate. Functionally, involved in the ethylmalonyl-CoA pathway for acetate assimilation. Catalyzes the reversible condensation of glyoxylate and acetyl-CoA to L-malyl-CoA and the reversible condensation of glyoxylate and propionyl-CoA to yield beta-methylmalyl-CoA. The chain is L-malyl-CoA/beta-methylmalyl-CoA lyase from Cereibacter sphaeroides (strain ATCC 17025 / ATH 2.4.3) (Rhodobacter sphaeroides).